A 414-amino-acid chain; its full sequence is Relaxin-3 receptor 2 (414 aa).

Residues 1–43 (MATSNSSASLPTLFWVNGSGDSVLSTDGAAMPVQFLVLRIMVA) are Extracellular-facing. 2 N-linked (GlcNAc...) asparagine glycosylation sites follow: asparagine 5 and asparagine 17. A helical transmembrane segment spans residues 44–64 (LAYGLVGIIGLLGNLAVLWVL). The Cytoplasmic portion of the chain corresponds to 65-77 (GNCGQRVPGLSSD). The helical transmembrane segment at 78 to 98 (TFVFSLALADLGLALTLPFWA) threads the bilayer. The Extracellular portion of the chain corresponds to 99–116 (TESAMDFHWPFGSALCKV). Cysteines 114 and 191 form a disulfide. Residues 117–137 (VLTTTVLSIYASTFLITALSI) form a helical membrane-spanning segment. Residues 138-155 (ARYWVVAMAVGPGSHLSV) lie on the Cytoplasmic side of the membrane. The chain crosses the membrane as a helical span at residues 156-176 (FWARVVTLAVWVAAALVTVPT). Over 177-209 (AIFGAEVELWGVCLCLLRFPSRYWLGAYQLQRV) the chain is Extracellular. Residues 210-230 (VLAFIVPLGVITTSYLLLLAF) traverse the membrane as a helical segment. Residues 231–255 (LERQQRCRPRQWQDSRVVARSVRVL) lie on the Cytoplasmic side of the membrane. Residues 256–276 (VASFALCWVPNHVVTLWEILV) form a helical membrane-spanning segment. The Extracellular portion of the chain corresponds to 277 to 293 (RFDLVPWDSTFYTFHTY). Residues 294–316 (ILPITTCLAHSNSCLNPVIYCLL) traverse the membrane as a helical segment. The Cytoplasmic segment spans residues 317 to 414 (RREPQQVLVS…SQAAVSPGEV (98 aa)).

Belongs to the G-protein coupled receptor 1 family. Detected only in bone marrow.

The protein localises to the cell membrane. High affinity receptor for INSL5. Also acts as a receptor for RLN3/relaxin-3, as well as bradykinin and kallidin. Binding of the ligand inhibit cAMP accumulation. This Mus musculus (Mouse) protein is Relaxin-3 receptor 2 (Rxfp4).